The following is a 305-amino-acid chain: E3 ubiquitin-protein ligase RNF115 (305 aa).

At alanine 2 the chain carries N-acetylalanine. Residues 100–110 (NRANERGHQTH) show a composition bias toward basic and acidic residues. The disordered stretch occupies residues 100–139 (NRANERGHQTHTDFWGPSRPPRLPMTRRYRSRGSTRPDRS). At serine 133 the chain carries Phosphoserine. An RING-type zinc finger spans residues 229-270 (CPVCKEDYTVEEKVRQLPCNHFFHSSCIVPWLELHDTCPVCR). Residues 274–305 (NGEDSTRQTQSSEASASNRFSNDSQLHDRWTF) are disordered. Residues 280–297 (RQTQSSEASASNRFSNDS) are compositionally biased toward polar residues.

In terms of assembly, interacts with RAB7A. Interacts with EGFR and FLT3. Interacts with BST2. Interacts with STX17. Interacts with YWHAE. Post-translationally, phosphorylated by AKT1, allowing association with the 14-3-3 chaperones that facilitates associating with TLRs. Deubiquitinated by USP9X; antogonizing its autoubiquitination and subsequent proteasomal degradation. In terms of processing, RING-type zinc finger-dependent and E2-dependent autoubiquitination.

The protein resides in the cytoplasm. It is found in the cytoplasmic vesicle. The protein localises to the phagosome. Its subcellular location is the nucleus. It localises to the endoplasmic reticulum. The protein resides in the golgi apparatus. The catalysed reaction is S-ubiquitinyl-[E2 ubiquitin-conjugating enzyme]-L-cysteine + [acceptor protein]-L-lysine = [E2 ubiquitin-conjugating enzyme]-L-cysteine + N(6)-ubiquitinyl-[acceptor protein]-L-lysine.. Its pathway is protein modification; protein ubiquitination. In terms of biological role, E3 ubiquitin-protein ligase that catalyzes the 'Lys-48'- and/or 'Lys-63'-linked polyubiquitination of various substrates and thereby plays a role in a number of signaling pathways including autophagy, innate immunity, cell proliferation and cell death. Plays a role in the endosomal trafficking and degradation of membrane receptors including EGFR, FLT3, MET and CXCR4 through their polyubiquitination. Participates together with BST2 in antiviral immunity by facilitating the internalization of HIV-1 virions into intracellular vesicles leading to their lysosomal degradation. Also possesses an antiviral activity independently of BST2 by promoting retroviral GAG proteins ubiquitination, redistribution to endo-lysosomal compartments and, ultimately, lysosomal degradation. Catalyzes distinct types of ubiquitination on MAVS and STING1 at different phases of viral infection to promote innate antiviral response. Mediates the 'Lys-48'-linked ubiquitination of MAVS leading to its proteasomal degradation and ubiquitinates STING1 via 'Lys-63'-linked polyubiquitination, critical for its oligomerization and the subsequent recruitment of TBK1. Plays a positive role in the autophagosome-lysosome fusion by interacting with STX17 and enhancing its stability without affecting 'Lys-48'- or 'Lys-63'-linked polyubiquitination levels, which in turn promotes autophagosome maturation. Negatively regulates TLR-induced expression of proinflammatory cytokines by catalyzing 'Lys-11'-linked ubiquitination of RAB1A and RAB13 to inhibit post-ER trafficking of TLRs to the Golgi by RAB1A and subsequently from the Golgi apparatus to the cell surface by RAB13. This chain is E3 ubiquitin-protein ligase RNF115, found in Mus musculus (Mouse).